A 207-amino-acid chain; its full sequence is 2,3-bisphosphoglycerate-dependent phosphoglycerate mutase (207 aa).

Substrate is bound by residues 9-16 (RHGQSDWN), 22-23 (TG), R61, 88-91 (ERDY), K99, 115-116 (RR), and 159-160 (GN). The Tele-phosphohistidine intermediate role is filled by H10. Catalysis depends on E88, which acts as the Proton donor/acceptor.

It belongs to the phosphoglycerate mutase family. BPG-dependent PGAM subfamily. Homodimer.

It carries out the reaction (2R)-2-phosphoglycerate = (2R)-3-phosphoglycerate. The protein operates within carbohydrate degradation; glycolysis; pyruvate from D-glyceraldehyde 3-phosphate: step 3/5. Its function is as follows. Catalyzes the interconversion of 2-phosphoglycerate and 3-phosphoglycerate. The sequence is that of 2,3-bisphosphoglycerate-dependent phosphoglycerate mutase from Beijerinckia indica subsp. indica (strain ATCC 9039 / DSM 1715 / NCIMB 8712).